The chain runs to 672 residues: uncharacterized protein (672 aa).

Over residues 1 to 10 the composition is skewed to basic and acidic residues; the sequence is MAKSDGDDPL. Residues 1-41 form a disordered region; that stretch reads MAKSDGDDPLRPASPRLRSSRRHSLRYSAYTGGPDPLAPPV.

This is an uncharacterized protein from Mycobacterium bovis (strain ATCC BAA-935 / AF2122/97).